Here is a 226-residue protein sequence, read N- to C-terminus: Endonuclease V (226 aa).

Mg(2+) is bound by residues aspartate 42 and aspartate 110.

This sequence belongs to the endonuclease V family. Requires Mg(2+) as cofactor.

The protein localises to the cytoplasm. It catalyses the reaction Endonucleolytic cleavage at apurinic or apyrimidinic sites to products with a 5'-phosphate.. In terms of biological role, DNA repair enzyme involved in the repair of deaminated bases. Selectively cleaves double-stranded DNA at the second phosphodiester bond 3' to a deoxyinosine leaving behind the intact lesion on the nicked DNA. The sequence is that of Endonuclease V from Thermus thermophilus (strain ATCC BAA-163 / DSM 7039 / HB27).